We begin with the raw amino-acid sequence, 211 residues long: Thymidylate kinase (211 aa).

11 to 18 (GPDGAGKT) is an ATP binding site.

It belongs to the thymidylate kinase family.

It carries out the reaction dTMP + ATP = dTDP + ADP. In terms of biological role, phosphorylation of dTMP to form dTDP in both de novo and salvage pathways of dTTP synthesis. In Streptococcus pyogenes serotype M18 (strain MGAS8232), this protein is Thymidylate kinase.